We begin with the raw amino-acid sequence, 1064 residues long: Ribosome quality control complex subunit NEMF (1064 aa).

Threonine 7 is subject to Phosphothreonine. The stretch at 296 to 359 forms a coiled coil; the sequence is VDEFYSKIEG…LIEMNLQIVD (64 aa). A Phosphoserine modification is found at serine 417. The disordered stretch occupies residues 420–451; it reads EDGDGDASIENSDAEAPKGKKKKQKNKQLQKP. Residues 438–447 are compositionally biased toward basic residues; it reads GKKKKQKNKQ. Residues 481–512 adopt a coiled-coil conformation; that stretch reads AAKKTQRTVEAAEKAFKSAEKKTKQTLKEVQT. Acidic residues predominate over residues 694-707; sequence EQLEGGDSSEEETE. 2 disordered regions span residues 694 to 718 and 731 to 973; these read EQLEGGDSSEEETEELHGMPGDVEL and SGRD…SLTG. The segment covering 731 to 756 has biased composition (basic and acidic residues); sequence SGRDELSSEDGEAKAVTKDQEPIGEM. Serine 737 is subject to Phosphoserine. The span at 771–781 shows a compositional bias: polar residues; that stretch reads IDLSHLQSQRP. Positions 828-839 are enriched in basic and acidic residues; the sequence is IEEKDKERESAV. The stretch at 858 to 882 forms a coiled coil; it reads KRGQKSKMKKMKEKYKDQDDEDREL. The segment covering 859–870 has biased composition (basic residues); it reads RGQKSKMKKMKE. Residues 947–959 show a composition bias toward basic and acidic residues; the sequence is DDPHDDKEEHDLD. Polar residues predominate over residues 960–973; the sequence is QQGNEENLFDSLTG.

Belongs to the NEMF family. In terms of assembly, component of the ribosome quality control complex (RQC), composed of the E3 ubiquitin ligase LTN1, TCF25 and NEMF associated with the 60S ribosomal subunit. The complex probably also contains VCP/p97 and its ubiquitin-binding cofactors. Interacts (via its N-terminus) with XPO1.

Its subcellular location is the cytoplasm. It is found in the cytosol. The protein localises to the nucleus. Functionally, key component of the ribosome quality control complex (RQC), a ribosome-associated complex that mediates the extraction of incompletely synthesized nascent chains from stalled ribosomes as well as their ubiquitin-mediated proteasomal degradation. Thereby, frees 60S subunit ribosomes from the stalled translation complex and prevents the accumulation of nascent polypeptide chains that are potentially toxic for the cell. Within the RQC complex, NEMF specifically binds stalled 60S ribosomal subunits by recognizing an exposed, nascent chain-conjugated tRNA moiety and promotes the recruitment of LTN1 to stalled 60S subunits. Following binding to stalled 60S ribosomal subunits, NEMF mediates CAT tailing by recruiting alanine-charged tRNA to the A-site and directing the elongation of stalled nascent chains independently of mRNA or 40S subunits, leading to non-templated C-terminal alanine extensions (CAT tails). Mainly recruits alanine-charged tRNAs, but can also other amino acid-charged tRNAs. CAT tailing is required to promote ubiquitination of stalled nascent chains by different E3 ubiquitin-protein ligases. In the canonical RQC pathway (RQC-L), CAT tailing facilitates LTN1-dependent ubiquitination by exposing lysine residues that would otherwise remain buried in the ribosomal exit tunnel. In the alternative RQC pathway (RQC-C) CAT tailing creates an C-degron mainly composed of alanine that is recognized by the CRL2(KLHDC10) and RCHY1/PIRH2 E3 ligases, leading to ubiquitination and degradation of stalled nascent chains. NEMF may also indirectly play a role in nuclear export. The sequence is that of Ribosome quality control complex subunit NEMF from Mus musculus (Mouse).